The primary structure comprises 273 residues: Dermonecrotic toxin LhSicTox-alphaIA2aii (273 aa).

Residue His5 is part of the active site. The Mg(2+) site is built by Glu25 and Asp27. His41 serves as the catalytic Nucleophile. Disulfide bonds link Cys45–Cys51 and Cys47–Cys190. Asp85 contributes to the Mg(2+) binding site.

This sequence belongs to the arthropod phospholipase D family. Class II subfamily. Mg(2+) serves as cofactor. Expressed by the venom gland.

It localises to the secreted. It carries out the reaction an N-(acyl)-sphingosylphosphocholine = an N-(acyl)-sphingosyl-1,3-cyclic phosphate + choline. The enzyme catalyses an N-(acyl)-sphingosylphosphoethanolamine = an N-(acyl)-sphingosyl-1,3-cyclic phosphate + ethanolamine. The catalysed reaction is a 1-acyl-sn-glycero-3-phosphocholine = a 1-acyl-sn-glycero-2,3-cyclic phosphate + choline. It catalyses the reaction a 1-acyl-sn-glycero-3-phosphoethanolamine = a 1-acyl-sn-glycero-2,3-cyclic phosphate + ethanolamine. In terms of biological role, dermonecrotic toxins cleave the phosphodiester linkage between the phosphate and headgroup of certain phospholipids (sphingolipid and lysolipid substrates), forming an alcohol (often choline) and a cyclic phosphate. This toxin acts on sphingomyelin (SM). It may also act on ceramide phosphoethanolamine (CPE), lysophosphatidylcholine (LPC) and lysophosphatidylethanolamine (LPE), but not on lysophosphatidylserine (LPS), and lysophosphatidylglycerol (LPG). It acts by transphosphatidylation, releasing exclusively cyclic phosphate products as second products. Induces dermonecrosis, hemolysis, increased vascular permeability, edema, inflammatory response, and platelet aggregation. The polypeptide is Dermonecrotic toxin LhSicTox-alphaIA2aii (Loxosceles hirsuta (Recluse spider)).